The chain runs to 288 residues: Diaminopimelate epimerase (288 aa).

Residues Asn-13, Gln-46, and Asn-66 each coordinate substrate. Cys-75 serves as the catalytic Proton donor. Substrate is bound by residues Gly-76–Asn-77, Asn-166, Asn-199, and Glu-217–Arg-218. Cys-226 functions as the Proton acceptor in the catalytic mechanism. Residue Gly-227 to Thr-228 participates in substrate binding.

Belongs to the diaminopimelate epimerase family. Homodimer.

The protein resides in the cytoplasm. It carries out the reaction (2S,6S)-2,6-diaminopimelate = meso-2,6-diaminopimelate. It participates in amino-acid biosynthesis; L-lysine biosynthesis via DAP pathway; DL-2,6-diaminopimelate from LL-2,6-diaminopimelate: step 1/1. Catalyzes the stereoinversion of LL-2,6-diaminopimelate (L,L-DAP) to meso-diaminopimelate (meso-DAP), a precursor of L-lysine and an essential component of the bacterial peptidoglycan. The chain is Diaminopimelate epimerase from Cupriavidus pinatubonensis (strain JMP 134 / LMG 1197) (Cupriavidus necator (strain JMP 134)).